Consider the following 144-residue polypeptide: MLMPKRVKYRREHRGKMRGRAKGGTEVTFGEFGLQAQNASWITNRQIEAARRAMTRYMKRGGKVWIKIFPSKPYTAKPLEVRMGSGKGAPEGWVAVVKPGKVMFEIAGVSEEVAREALRLAAHKLPVKCKFVKREENGGESNEN.

The protein belongs to the universal ribosomal protein uL16 family. Part of the 50S ribosomal subunit.

In terms of biological role, binds 23S rRNA and is also seen to make contacts with the A and possibly P site tRNAs. This Bacillus cytotoxicus (strain DSM 22905 / CIP 110041 / 391-98 / NVH 391-98) protein is Large ribosomal subunit protein uL16.